We begin with the raw amino-acid sequence, 273 residues long: Putative phosphoenolpyruvate synthase regulatory protein (273 aa).

153 to 160 is a binding site for ADP; it reads GVSRSGKT.

Belongs to the pyruvate, phosphate/water dikinase regulatory protein family. PSRP subfamily.

It catalyses the reaction [pyruvate, water dikinase] + ADP = [pyruvate, water dikinase]-phosphate + AMP + H(+). It carries out the reaction [pyruvate, water dikinase]-phosphate + phosphate + H(+) = [pyruvate, water dikinase] + diphosphate. Its function is as follows. Bifunctional serine/threonine kinase and phosphorylase involved in the regulation of the phosphoenolpyruvate synthase (PEPS) by catalyzing its phosphorylation/dephosphorylation. This is Putative phosphoenolpyruvate synthase regulatory protein from Polaromonas sp. (strain JS666 / ATCC BAA-500).